We begin with the raw amino-acid sequence, 330 residues long: Type II restriction enzyme Cfr9I (330 aa).

This sequence belongs to the XcyI type II restriction endonuclease family. Requires Mg(2+) as cofactor.

It carries out the reaction Endonucleolytic cleavage of DNA to give specific double-stranded fragments with terminal 5'-phosphates.. Functionally, an E and P subtype restriction enzyme that recognizes the double-stranded sequence 5'-CCCGGG-3' and cleaves after C-1. In Citrobacter freundii, this protein is Type II restriction enzyme Cfr9I (cfr9IR).